Reading from the N-terminus, the 388-residue chain is Dual-specificity RNA methyltransferase RlmN (388 aa).

The Proton acceptor role is filled by glutamate 109. One can recognise a Radical SAM core domain in the interval 115–354; that stretch reads EEDRATLCVS…TIVRKTRGDD (240 aa). Cysteine 122 and cysteine 359 are oxidised to a cystine. [4Fe-4S] cluster-binding residues include cysteine 129, cysteine 133, and cysteine 136. S-adenosyl-L-methionine is bound by residues 183–184, serine 215, 237–239, and asparagine 316; these read GE and SLH. The S-methylcysteine intermediate role is filled by cysteine 359.

This sequence belongs to the radical SAM superfamily. RlmN family. Requires [4Fe-4S] cluster as cofactor.

It is found in the cytoplasm. The enzyme catalyses adenosine(2503) in 23S rRNA + 2 reduced [2Fe-2S]-[ferredoxin] + 2 S-adenosyl-L-methionine = 2-methyladenosine(2503) in 23S rRNA + 5'-deoxyadenosine + L-methionine + 2 oxidized [2Fe-2S]-[ferredoxin] + S-adenosyl-L-homocysteine. It catalyses the reaction adenosine(37) in tRNA + 2 reduced [2Fe-2S]-[ferredoxin] + 2 S-adenosyl-L-methionine = 2-methyladenosine(37) in tRNA + 5'-deoxyadenosine + L-methionine + 2 oxidized [2Fe-2S]-[ferredoxin] + S-adenosyl-L-homocysteine. Its function is as follows. Specifically methylates position 2 of adenine 2503 in 23S rRNA and position 2 of adenine 37 in tRNAs. m2A2503 modification seems to play a crucial role in the proofreading step occurring at the peptidyl transferase center and thus would serve to optimize ribosomal fidelity. This is Dual-specificity RNA methyltransferase RlmN from Klebsiella pneumoniae (strain 342).